The sequence spans 386 residues: ADP,ATP carrier protein, mitochondrial (386 aa).

The transit peptide at 1 to 76 directs the protein to the mitochondrion; the sequence is ADNQHPTVYQ…ANASPVFVQA (76 aa). 3 Solcar repeats span residues 83-176, 188-281, and 289-375; these read AAFA…FKRL, KWFA…LKPV, and DSFF…LQVI. The next 5 membrane-spanning stretches (helical) occupy residues 85–112, 153–177, 186–206, 257–278, and 292–312; these read FATDFLMGGVSAAVSKTAAAPIERVKLL, TANVIRYFPTQALNFAFKDYFKRLF, YWKWFAGNLASGGGAGASSLL, FNISCVGIIVYRGLYFGMYDSL, and FASFALGWLITNGAGLASYPI. Residues R158 and K170 each contribute to the ADP site. R316 serves as a coordination point for ADP. Positions 316–321 are important for transport activity; that stretch reads RRRMMM. Residues 316 to 321 carry the Nucleotide carrier signature motif motif; it reads RRRMMM. A helical transmembrane segment spans residues 352–372; the sequence is AGANVLRAVAGAGVLAGYDKL.

Belongs to the mitochondrial carrier (TC 2.A.29) family. In terms of assembly, monomer.

It localises to the mitochondrion inner membrane. It carries out the reaction ADP(in) + ATP(out) = ADP(out) + ATP(in). With respect to regulation, the matrix-open state (m-state) is inhibited by the membrane-permeable bongkrekic acid (BKA). The cytoplasmic-open state (c-state) is inhibited by the membrane-impermeable toxic inhibitor carboxyatractyloside (CATR). ADP:ATP antiporter that mediates import of ADP into the mitochondrial matrix for ATP synthesis, and export of ATP out to fuel the cell. Cycles between the cytoplasmic-open state (c-state) and the matrix-open state (m-state): operates by the alternating access mechanism with a single substrate-binding site intermittently exposed to either the cytosolic (c-state) or matrix (m-state) side of the inner mitochondrial membrane. In Solanum tuberosum (Potato), this protein is ADP,ATP carrier protein, mitochondrial (ANT1).